The chain runs to 382 residues: Probable purine permease 4 (382 aa).

10 helical membrane-spanning segments follow: residues 25–45 (LTLLIVTYFFLFFGSIASSLL), 62–82 (WVQSAGFPLLLILIYFPHYVL), 98–118 (LIFSVLIGLVLGFNNFLFSWG), 121–141 (YLPVSTSSLLLSTQLVFTLIL), 150–170 (ITFSNLNCVVLLTLSSVLLAL), 185–205 (YFIGYVSTIGAGLLFALYLPV), 224–244 (LVMEFAATVFATIGMACEGGF), 260–280 (TFYWTFAILANVVTWQLSFAA), 291–311 (ITGGICMTALLAMNVIGGVVA), and 315–335 (VFGGVKIVSTVLCIWGFSSYT). The 105-residue stretch at 66-170 (AGFPLLLILI…LTLSSVLLAL (105 aa)) folds into the EamA domain. Positions 345–364 (EEKEKGEYSGVKTTEDSGEM) are disordered.

This sequence belongs to the purine permeases (TC 2.A.7.14) family.

It is found in the membrane. In Arabidopsis thaliana (Mouse-ear cress), this protein is Probable purine permease 4 (PUP4).